Consider the following 524-residue polypeptide: 2-isopropylmalate synthase (524 aa).

The 263-residue stretch at 5-267 (VIIFDTTLRD…HTNINHQEIF (263 aa)) folds into the Pyruvate carboxyltransferase domain. Residues Asp-14, His-202, His-204, and Asn-238 each coordinate Mn(2+). The segment at 392–524 (SLDYFSVQSG…SKHQNNQETV (133 aa)) is regulatory domain.

It belongs to the alpha-IPM synthase/homocitrate synthase family. LeuA type 1 subfamily. Homodimer. Mn(2+) is required as a cofactor.

It localises to the cytoplasm. The enzyme catalyses 3-methyl-2-oxobutanoate + acetyl-CoA + H2O = (2S)-2-isopropylmalate + CoA + H(+). It participates in amino-acid biosynthesis; L-leucine biosynthesis; L-leucine from 3-methyl-2-oxobutanoate: step 1/4. Functionally, catalyzes the condensation of the acetyl group of acetyl-CoA with 3-methyl-2-oxobutanoate (2-ketoisovalerate) to form 3-carboxy-3-hydroxy-4-methylpentanoate (2-isopropylmalate). This is 2-isopropylmalate synthase from Serratia proteamaculans (strain 568).